The primary structure comprises 68 residues: MLKPSINELLTVVDSRYSLVVATAKRARQIIDGAKIKVDSDSNKPVSTAAKEIYEGKVTYIKTDEDER.

This sequence belongs to the RNA polymerase subunit omega family. As to quaternary structure, the RNAP catalytic core consists of 2 alpha, 1 beta, 1 beta' and 1 omega subunit. When a sigma factor is associated with the core the holoenzyme is formed, which can initiate transcription.

The enzyme catalyses RNA(n) + a ribonucleoside 5'-triphosphate = RNA(n+1) + diphosphate. In terms of biological role, promotes RNA polymerase assembly. Latches the N- and C-terminal regions of the beta' subunit thereby facilitating its interaction with the beta and alpha subunits. The sequence is that of DNA-directed RNA polymerase subunit omega from Alkaliphilus metalliredigens (strain QYMF).